The sequence spans 162 residues: Ribosome-binding factor A (162 aa).

Positions 123–162 (VARVAAGASPAGDPDPYKEPRVEDADDAEVDEPSRSRQAD) are disordered. The span at 125 to 136 (RVAAGASPAGDP) shows a compositional bias: low complexity.

This sequence belongs to the RbfA family. As to quaternary structure, monomer. Binds 30S ribosomal subunits, but not 50S ribosomal subunits or 70S ribosomes.

The protein resides in the cytoplasm. Functionally, one of several proteins that assist in the late maturation steps of the functional core of the 30S ribosomal subunit. Associates with free 30S ribosomal subunits (but not with 30S subunits that are part of 70S ribosomes or polysomes). Required for efficient processing of 16S rRNA. May interact with the 5'-terminal helix region of 16S rRNA. The sequence is that of Ribosome-binding factor A from Rhodococcus opacus (strain B4).